A 771-amino-acid polypeptide reads, in one-letter code: Ribonucleoside-diphosphate reductase large subunit (771 aa).

Positions 1 to 92 constitute an ATP-cone domain; that stretch reads MFVIKRNGYK…VSNLHKETKK (92 aa). Residues 5–6, 11–17, threonine 53, aspartate 57, and lysine 88 contribute to the ATP site; these read KR and ENVMFDK. Residues serine 202 and serine 217 each contribute to the GDP site. Residues 226–228, lysine 243, and arginine 256 each bind dTTP; that span reads DSI. Asparagine 427 is a binding site for GDP. Asparagine 427 functions as the Proton acceptor in the catalytic mechanism. Cysteine 429 functions as the Cysteine radical intermediate in the catalytic mechanism. GDP-binding positions include glutamate 431 and 603-606; that span reads TAST. The Proton acceptor role is filled by glutamate 431.

This sequence belongs to the ribonucleoside diphosphate reductase large chain family. Interacts with RNR2/OPG047 subunit. Requires Mg(2+) as cofactor.

The enzyme catalyses a 2'-deoxyribonucleoside 5'-diphosphate + [thioredoxin]-disulfide + H2O = a ribonucleoside 5'-diphosphate + [thioredoxin]-dithiol. In terms of biological role, ribonucleoside-diphosphate reductase holoenzyme provides the precursors necessary for viral DNA synthesis. Allows virus growth in non-dividing cells. Catalyzes the biosynthesis of deoxyribonucleotides from the corresponding ribonucleotides. This Homo sapiens (Human) protein is Ribonucleoside-diphosphate reductase large subunit (OPG080).